The chain runs to 243 residues: Calcium-binding protein LPS1-beta (243 aa).

EF-hand domains lie at 15-49, 47-82, 85-120, 121-156, 157-189, 191-226, and 227-243; these read EVIDAMKQEFKDNYDTNKDGTVSCAELAKLMDCPE, CPEEEAQRIITGVDVNCDGRMQFDEFLLYMEGYTKE, YSSDEIKQMFDDLDKDGNGRISPDELSKGVGEISTK, LVEGMANKLIQEADKDGDGHVNMEEFVDTLVAKLPL, CFKKCFHEDFDKNGDGSLTNAEMSQLLNRNLPG, YSEELINEMISRVDLNGDGRVQFGEFLMHAQNLSKD, and DIKNQFMAIDKDKNGKI. D29, N31, D33, T35, E40, D60, N62, D64, R66, E71, D98, D100, N102, R104, E109, D134, D136, D138, H140, E145, D167, N169, D171, S173, E178, D204, N206, D208, R210, and E215 together coordinate Ca(2+).

In terms of tissue distribution, aboral ectoderm, a squamous epithelium covering the surface of the late stage embryo and larva.

Its function is as follows. Calcium-binding protein involved in larval development and metamorphosis. Likely to function as calcium buffers mediating the transport of calcium from the sea water to the blastocoel where calcium is required for skeleton formation. The chain is Calcium-binding protein LPS1-beta from Lytechinus pictus (Painted sea urchin).